The chain runs to 581 residues: MTIIHNPKWWKEATVYQIYPASFKDSNNDGWGDLAGITSKLDYVKELGVDAIWVCPFYDSPQEDMGYDIANYEKVWPRYGTNEDCFQMIEEAHKRGIKVIVDLVINHCSEEHEWFKESRSSKANPKRDWFFWRPPKGYDEKGNPIPPNNWRSFFGGSAWRYDEKTGEFFLHVFALGQPDFNWENEECRKAIYDSSVGYWLRHNVDGFRIDVGSMYSKVEGLPDAPITDPTVPYQKGTEFFINGPRIHEYHKEMHNYMLSQVPEGKEIMTVGEVGIGNEDDFRVYTSAKEGELNMMFNFKHTSVGENPKCKYELIPFTLKDFKLALAESFLFIENTDCWSTIYLENHDQPRSVSRFGSDSPKWREISSKMLATLIISLTGTVFIYQGQELGMPNFKNRKIEQIKCVEGTGTYAAIKRDYGEDSEKMKKFFEALALISRDHGRTPFPWSADEPSAGFSKDAKPWIDMNESFRDGINAEAELKDKNSVFFFWKKALQVRKEHKDILVYGHNFQFIDLDNDKLFMFTKDTDNKKMFAVFNFSSDNTDFSVPDNEASYTMFFGNYANSNGDSRTLQPWEGRLYLLK.

The active-site Nucleophile is the Asp210. Glu272 serves as the catalytic Proton donor.

It belongs to the glycosyl hydrolase 13 family.

It carries out the reaction Hydrolysis of (1-&gt;6)-alpha-D-glucosidic linkages in some oligosaccharides produced from starch and glycogen by alpha-amylase, and in isomaltose.. Its function is as follows. Alpha-glucosidase with specificity for isomaltose, maltose, and palatinose. In Saccharomyces cerevisiae (strain ATCC 204508 / S288c) (Baker's yeast), this protein is Oligo-1,6-glucosidase IMA5 (IMA5).